The following is a 181-amino-acid chain: Salmonella anti-inflammatory response activator (181 aa).

Residues 4 to 24 (FVYIYILVIYGSYLWFSLGGN) form a helical membrane-spanning segment.

In terms of assembly, interacts with host (human) STAT3.

Its subcellular location is the membrane. It is found in the host cytoplasm. A Salmonella strain-specific effector that induces a host STAT3-dependent anti-inflammatory pathway. In bacteria-infected host cells (human) leads to phosphorylation of host STAT3, at least on 'Tyr-705' and interleukin-10 (IL-10, IL10) production; expressing the gene alone in host cells induces STAT3 phosphorylation and IL-10 production. IL-10 production requires STAT3 in infected cells. Contributes to virulence in mouse infection models. Encoded in only a few S.typhimurium serovars, it may be a specific effector for adaptation to bovine hosts. This Salmonella typhimurium (strain 14028s / SGSC 2262) protein is Salmonella anti-inflammatory response activator.